A 300-amino-acid polypeptide reads, in one-letter code: HTH-type transcriptional activator NahR (300 aa).

One can recognise an HTH lysR-type domain in the interval 6–63; the sequence is LDLNLLVVFNQLLVDRRVSITAENLGLTQPAVSNALKRLRTSLQDPLFVRTHQGMEPT. The segment at residues 23–42 is a DNA-binding region (H-T-H motif); sequence VSITAENLGLTQPAVSNALK.

The protein belongs to the LysR transcriptional regulatory family.

The protein localises to the cytoplasm. Functionally, regulates the expression of the naphthalene (nahA-F) and salicylate (nahG-M) metabolism genes. The chain is HTH-type transcriptional activator NahR (nahR) from Pseudomonas putida (Arthrobacter siderocapsulatus).